We begin with the raw amino-acid sequence, 711 residues long: Interferon-induced GTP-binding protein Mx2 (711 aa).

The Dynamin-type G domain maps to 115–387 (DLALPAIAVI…LILHINKSLP (273 aa)). Residues 125–132 (GDQSSGKS) form a G1 motif region. A GTP-binding site is contributed by 125 to 132 (GDQSSGKS). A G2 motif region spans residues 150-152 (VTR). Residues 225 to 228 (DLPG) are G3 motif. GTP-binding positions include 225 to 229 (DLPGI) and 294 to 297 (TKPD). The tract at residues 294–297 (TKPD) is G4 motif. The tract at residues 326 to 329 (RCRG) is G5 motif. The region spanning 623-711 (NDEIGVHLNA…ARRALYMFFS (89 aa)) is the GED domain.

The protein belongs to the TRAFAC class dynamin-like GTPase superfamily. Dynamin/Fzo/YdjA family.

It is found in the cytoplasm. Its subcellular location is the nucleus. Its function is as follows. Interferon-induced dynamin-like GTPase with antiviral activity against vesicular stomatitis virus (VSV). The protein is Interferon-induced GTP-binding protein Mx2 (MX2) of Canis lupus familiaris (Dog).